Reading from the N-terminus, the 721-residue chain is Glucans biosynthesis glucosyltransferase H (721 aa).

7 consecutive transmembrane segments (helical) span residues 54 to 74, 85 to 105, 404 to 424, 458 to 478, 493 to 513, 548 to 568, and 569 to 589; these read LIMVATAVLSAAGIYEMYQVL, VVLVLFAALFAWVALSFVSAL, GIGAYLTAPMWLAFLVAGILI, FAGTMGLLILPKLLALLLVLI, FGGVLLETMISALTAPVMMVF, YALPTALGATMAVGAWLVSWP, and LLLWMTPVIVGLLLAIPVALL.

The protein belongs to the glycosyltransferase 2 family. OpgH subfamily.

It is found in the cell inner membrane. The protein operates within glycan metabolism; osmoregulated periplasmic glucan (OPG) biosynthesis. In terms of biological role, involved in the biosynthesis of osmoregulated periplasmic glucans (OPGs). The polypeptide is Glucans biosynthesis glucosyltransferase H (Rhodopseudomonas palustris (strain TIE-1)).